The sequence spans 211 residues: Protein-L-isoaspartate O-methyltransferase (211 aa).

The active site involves Ser62.

Belongs to the methyltransferase superfamily. L-isoaspartyl/D-aspartyl protein methyltransferase family.

The protein resides in the cytoplasm. The catalysed reaction is [protein]-L-isoaspartate + S-adenosyl-L-methionine = [protein]-L-isoaspartate alpha-methyl ester + S-adenosyl-L-homocysteine. In terms of biological role, catalyzes the methyl esterification of L-isoaspartyl residues in peptides and proteins that result from spontaneous decomposition of normal L-aspartyl and L-asparaginyl residues. It plays a role in the repair and/or degradation of damaged proteins. The sequence is that of Protein-L-isoaspartate O-methyltransferase from Shewanella baltica (strain OS195).